The chain runs to 418 residues: Serum response factor homolog A (418 aa).

4 disordered regions span residues L14–A67, C144–Q170, R301–S351, and S388–C418. Low complexity-rich tracts occupy residues P22–T39 and T51–E61. In terms of domain architecture, MADS-box spans A67 to K127. Composition is skewed to low complexity over residues N150–Q170, N306–S351, and S388–P399. Over residues N400–C418 the composition is skewed to polar residues.

It localises to the nucleus. Functionally, required for proper slug migration, spore differentiation and stalk differentiation (under nonbuffered conditions). Could be involved in late events of spore maturation necessary for spore stability. This chain is Serum response factor homolog A (srfA), found in Dictyostelium discoideum (Social amoeba).